The following is a 160-amino-acid chain: MTKEVTVESFELDHIAVKAPYVRLISEEFGPKGDLITNFDIRLVQPNEDSIPTAGLHTIEHLLAKLIRQRIDGMIDCSPFGCRTGFHLIMWGKHTTTQIATVIKASLEEIANTISWKDVPGTTIESCGNYKDHSLFSAKEWAKLILKQGISDDPFERHLV.

Residues histidine 57, histidine 61, and cysteine 127 each contribute to the Fe cation site.

Belongs to the LuxS family. As to quaternary structure, homodimer. Fe cation is required as a cofactor.

The catalysed reaction is S-(5-deoxy-D-ribos-5-yl)-L-homocysteine = (S)-4,5-dihydroxypentane-2,3-dione + L-homocysteine. Functionally, involved in the synthesis of autoinducer 2 (AI-2) which is secreted by bacteria and is used to communicate both the cell density and the metabolic potential of the environment. The regulation of gene expression in response to changes in cell density is called quorum sensing. Catalyzes the transformation of S-ribosylhomocysteine (RHC) to homocysteine (HC) and 4,5-dihydroxy-2,3-pentadione (DPD). The chain is S-ribosylhomocysteine lyase from Streptococcus mutans serotype c (strain ATCC 700610 / UA159).